The sequence spans 340 residues: Ketol-acid reductoisomerase (NADP(+)) (340 aa).

Residues 1–183 (MAVTVYYDKD…GAGRTGIIET (183 aa)) form the KARI N-terminal Rossmann domain. NADP(+) contacts are provided by residues 26 to 29 (FGSQ), Lys-49, Ser-54, and 84 to 87 (DELQ). His-109 is a catalytic residue. Position 135 (Gly-135) interacts with NADP(+). A KARI C-terminal knotted domain is found at 184-329 (TFKDETETDL…EKLRAMMPWI (146 aa)). Mg(2+) contacts are provided by Asp-192, Glu-196, Glu-228, and Glu-232. Ser-253 serves as a coordination point for substrate.

Belongs to the ketol-acid reductoisomerase family. Mg(2+) serves as cofactor.

The catalysed reaction is (2R)-2,3-dihydroxy-3-methylbutanoate + NADP(+) = (2S)-2-acetolactate + NADPH + H(+). It catalyses the reaction (2R,3R)-2,3-dihydroxy-3-methylpentanoate + NADP(+) = (S)-2-ethyl-2-hydroxy-3-oxobutanoate + NADPH + H(+). The protein operates within amino-acid biosynthesis; L-isoleucine biosynthesis; L-isoleucine from 2-oxobutanoate: step 2/4. Its pathway is amino-acid biosynthesis; L-valine biosynthesis; L-valine from pyruvate: step 2/4. Functionally, involved in the biosynthesis of branched-chain amino acids (BCAA). Catalyzes an alkyl-migration followed by a ketol-acid reduction of (S)-2-acetolactate (S2AL) to yield (R)-2,3-dihydroxy-isovalerate. In the isomerase reaction, S2AL is rearranged via a Mg-dependent methyl migration to produce 3-hydroxy-3-methyl-2-ketobutyrate (HMKB). In the reductase reaction, this 2-ketoacid undergoes a metal-dependent reduction by NADPH to yield (R)-2,3-dihydroxy-isovalerate. The sequence is that of Ketol-acid reductoisomerase (NADP(+)) from Campylobacter hominis (strain ATCC BAA-381 / DSM 21671 / CCUG 45161 / LMG 19568 / NCTC 13146 / CH001A).